Reading from the N-terminus, the 215-residue chain is Pre-hexon-linking protein VIII (215 aa).

T62 is modified (phosphothreonine; by host). The propeptide occupies 110–150; it reads AWINYKNGSVRYEAPLQLAEEQVGGPLNAFAIKHQLQLAGG.

This sequence belongs to the adenoviridae hexon-linking protein family. In terms of assembly, interacts with the peripentonal hexons as well as the hexons in the facets. Part of a complex composed of the core-capsid bridging protein, the endosome lysis protein VI and the hexon-linking protein VIII; these interactions bridge the virus core to the capsid. In terms of processing, cleaved by the viral protease during virion maturation. May cause the middle segment to be shed from the capsid.

It is found in the virion. Its subcellular location is the host nucleus. Functionally, structural component of the virion that acts as a cement protein on the capsid interior and which glue the peripentonal hexons and group-of-nine hexons together. This chain is Pre-hexon-linking protein VIII, found in Murine adenovirus A serotype 1 (MAdV-1).